A 641-amino-acid polypeptide reads, in one-letter code: White-opaque regulator 3 (641 aa).

Residues 13–27 (ANVNHQQLSQDTNSI) show a composition bias toward polar residues. Disordered stretches follow at residues 13–38 (ANVN…QQQP), 146–245 (QLAS…PMTR), and 258–287 (PIIY…PEPR). Low complexity-rich tracts occupy residues 28–38 (PQQQLQQQQQP) and 151–160 (QNQDQNQSQN). A compositionally biased stretch (polar residues) spans 161 to 172 (RYEQSSMTSIHT). Over residues 173-184 (NDNSSSVNNSPN) the composition is skewed to low complexity. Residues 193-204 (STFQPQHSNEGS) are compositionally biased toward polar residues. Low complexity-rich tracts occupy residues 216-242 (QQQQ…PQQP) and 264-280 (SSNS…NSSS). The dksA C4-type zinc finger occupies 317–337 (CRRCGSEIPLAERRFVLCPSC). Disordered stretches follow at residues 366 to 409 (LSKE…KVCQ), 480 to 507 (MSHQ…PQPH), 522 to 550 (NSGV…HNGS), and 568 to 641 (LQLQ…YPNN). A compositionally biased stretch (basic and acidic residues) spans 379–400 (QNNKSNEDQNNESRRGSQEKPA). Positions 486 to 495 (QPPPPPPPPL) are enriched in pro residues. Residues 522-533 (NSGVAGIQQPNN) show a composition bias toward polar residues. The segment covering 569–579 (QLQQQQQQQQQ) has biased composition (low complexity). The span at 597–606 (SFPPPPPPPL) shows a compositional bias: pro residues. The span at 610–641 (QHQGLQQYSHAQQQQQQQHQQQQPYHQEYPNN) shows a compositional bias: low complexity.

It localises to the nucleus. Transcription factor that modulates the white-opaque switch. This Candida albicans (strain SC5314 / ATCC MYA-2876) (Yeast) protein is White-opaque regulator 3 (WOR3).